A 678-amino-acid chain; its full sequence is MGDSHEDTSATVPEAVAEEVSLFSTTDIVLFSLIVGVLTYWFIFKKKKEEIPEFSKIQTTAPPVKESSFVEKMKKTGRNIIVFYGSQTGTAEEFANRLSKDAHRYGMRGMSADPEEYDLADLSSLPEIDKSLVVFCMATYGEGDPTDNAQDFYDWLQETDVDLTGVKFAVFGLGNKTYEHFNAMGKYVDQRLEQLGAQRIFELGLGDDDGNLEEDFITWREQFWPAVCEFFGVEATGEESSIRQYELVVHEDMDTAKVYTGEMGRLKSYENQKPPFDAKNPFLAAVTTNRKLNQGTERHLMHLELDISDSKIRYESGDHVAVYPANDSTLVNQIGEILGADLDVIMSLNNLDEESNKKHPFPCPTTYRTALTYYLDITNPPRTNVLYELAQYASEPSEQEHLHKMASSSGEGKELYLSWVVEARRHILAILQDYPSLRPPIDHLCELLPRLQARYYSIASSSKVHPNSVHICAVAVEYEAKSGRVNKGVATSWLRTKEPAGENGRRALVPMFVRKSQFRLPFKPTTPVIMVGPGTGVAPFMGFIQERAWLREQGKEVGETLLYYGCRRSDEDYLYREELARFHKDGALTQLNVAFSREQAHKVYVQHLLKRDKEHLWKLIHEGGAHIYVCGDARNMAKDVQNTFYDIVAEFGPMEHTQAVDYVKKLMTKGRYSLDVWS.

Gly2 carries the N-acetylglycine modification. Topologically, residues 2-22 are lumenal; the sequence is GDSHEDTSATVPEAVAEEVSL. Residues 23–43 traverse the membrane as a helical segment; the sequence is FSTTDIVLFSLIVGVLTYWFI. The Cytoplasmic portion of the chain corresponds to 44 to 678; sequence FKKKKEEIPE…KGRYSLDVWS (635 aa). Positions 80-224 constitute a Flavodoxin-like domain; sequence IIVFYGSQTG…DFITWREQFW (145 aa). Residues 86–91, 138–141, 173–182, and Asp208 each bind FMN; these read SQTGTA, ATYG, and LGNKTYEHFN. An FAD-binding FR-type domain is found at 279-521; it reads KNPFLAAVTT…FVRKSQFRLP (243 aa). Arg298 contacts NADP(+). Residues Arg424, 454–457, 472–474, Tyr478, and 488–491 contribute to the FAD site; these read RYYS, CAV, and GVAT. Residues Thr535, 596–597, 602–606, and Asp639 each bind NADP(+); these read SR and KVYVQ. An FAD-binding site is contributed by Trp677.

It belongs to the NADPH--cytochrome P450 reductase family. This sequence in the N-terminal section; belongs to the flavodoxin family. The protein in the C-terminal section; belongs to the flavoprotein pyridine nucleotide cytochrome reductase family. It depends on FAD as a cofactor. FMN serves as cofactor.

The protein localises to the endoplasmic reticulum membrane. It catalyses the reaction 2 oxidized [cytochrome P450] + NADPH = 2 reduced [cytochrome P450] + NADP(+) + H(+). Functionally, this enzyme is required for electron transfer from NADP to cytochrome P450 in microsomes. It can also provide electron transfer to heme oxygenase and cytochrome B5. The protein is NADPH--cytochrome P450 reductase of Mus musculus (Mouse).